The sequence spans 70 residues: Peptide BmKn2 (70 aa).

The first 23 residues, 1 to 23 (MKSQTFFLLFLVVLLLAISQSEA), serve as a signal peptide directing secretion. Phe-36 is modified (phenylalanine amide). The propeptide occupies 40–70 (SMRDMDTMKYLYDPSLSAADLKTLQKLMENY).

It belongs to the non-disulfide-bridged peptide (NDBP) superfamily. Short antimicrobial peptide (group 4) family. As to expression, expressed by the venom gland.

It localises to the secreted. The protein resides in the target cell membrane. Its function is as follows. Antimicrobial peptide with potent activity against bacteria. Has strong antibacterial activity against Gram-positive bacteria S.aureus, M.luteus, B.subtilis, and Gram-negative bacteria E.coli, P.aeruginosa and N.gonorrhoeae. Also shows low activity against HIV-1 PV. This is Peptide BmKn2 from Olivierus martensii (Manchurian scorpion).